A 378-amino-acid polypeptide reads, in one-letter code: Ribosomal RNA large subunit methyltransferase G (378 aa).

It belongs to the methyltransferase superfamily. RlmG family.

The protein resides in the cytoplasm. The catalysed reaction is guanosine(1835) in 23S rRNA + S-adenosyl-L-methionine = N(2)-methylguanosine(1835) in 23S rRNA + S-adenosyl-L-homocysteine + H(+). Functionally, specifically methylates the guanine in position 1835 (m2G1835) of 23S rRNA. The sequence is that of Ribosomal RNA large subunit methyltransferase G from Salmonella heidelberg (strain SL476).